The sequence spans 89 residues: Dynein light chain 1, cytoplasmic (89 aa).

The protein belongs to the dynein light chain family. As to quaternary structure, interacts with spn-F. Forms ternary complexes with spn-F and IKKepsilon. Ubiquitous.

It is found in the cytoplasm. Its subcellular location is the cytoskeleton. In terms of biological role, acts as a non-catalytic accessory component of a dynein complex. The chain is Dynein light chain 1, cytoplasmic (ctp) from Drosophila melanogaster (Fruit fly).